A 451-amino-acid chain; its full sequence is DNA double-strand break repair nuclease NurA (451 aa).

Mn(2+) contacts are provided by Asp51 and Asp126.

It belongs to the NurA family. Homodimer. Interacts with HerA. It depends on Mn(2+) as a cofactor.

With respect to regulation, exonuclease activity is stimulated in the presence of HerA. Functionally, involved in DNA double-strand break (DSB) repair. Probably acts with HerA to stimulate resection of the 5' strand and produce the long 3' single-strand that is required for RadA loading. Exhibits 5' endonuclease activity and both 5' and 3' exonuclease activities. The polypeptide is DNA double-strand break repair nuclease NurA (Pyrococcus furiosus (strain ATCC 43587 / DSM 3638 / JCM 8422 / Vc1)).